A 699-amino-acid chain; its full sequence is Polyribonucleotide nucleotidyltransferase (699 aa).

Positions 485 and 491 each coordinate Mg(2+). In terms of domain architecture, KH spans 552 to 611 (PRITVIKINPEKIRDVIGKGGAVIRALTEETGTTIELEDDGTVKIASSNGEATKEAIRRI). Residues 621 to 689 (GRIYNGKVIR…RQGRVRLSIK (69 aa)) enclose the S1 motif domain.

The protein belongs to the polyribonucleotide nucleotidyltransferase family. As to quaternary structure, component of the RNA degradosome, which is a multiprotein complex involved in RNA processing and mRNA degradation. Mg(2+) is required as a cofactor.

It localises to the cytoplasm. The enzyme catalyses RNA(n+1) + phosphate = RNA(n) + a ribonucleoside 5'-diphosphate. Involved in mRNA degradation. Catalyzes the phosphorolysis of single-stranded polyribonucleotides processively in the 3'- to 5'-direction. This Shewanella baltica (strain OS223) protein is Polyribonucleotide nucleotidyltransferase.